A 495-amino-acid polypeptide reads, in one-letter code: Inner membrane ALBINO3-like protein 1, chloroplastic (495 aa).

A helical membrane pass occupies residues 76 to 96; that stretch reads LGAIYVLADASASTAAAAVMP. Topologically, residues 97–206 are stromal; the sequence is TAVDSAAGAA…VLYEQAGVNP (110 aa). A helical transmembrane segment spans residues 207 to 227; the sequence is LAGCLPTLATIPIFIGLFSSL. At 228–273 the chain is on the lumenal side; sequence TNVANDGLLDTQGFYFVPSLAGPTTMAMRQSGLGTSWLWPLGPDGA. Residues 274–294 traverse the membrane as a helical segment; the sequence is PPIGWEDAAAYLTLPLLLVAV. The Stromal portion of the chain corresponds to 295–317; it reads QYASSSVTSPPIDPKDENANTQR. The helical transmembrane segment at 318 to 338 threads the bilayer; sequence ALLVFLPLMVGWFSLNVPAGL. Residues 339-441 lie on the Lumenal side of the membrane; sequence SLYYLANTVL…ASVSLSVDDS (103 aa). A helical membrane pass occupies residues 442–462; that stretch reads TAAIAGTATMAVTAGAPAAAM. Topologically, residues 463-495 are stromal; sequence DPSKVNRRCKRRRLTSLVQDGSTASAAVAGASA.

Belongs to the OXA1/ALB3/YidC (TC 2.A.9.2) family. In terms of assembly, associates with the LHCII complex and with the psaE subunit of the LHCI complex.

The protein resides in the plastid. It localises to the chloroplast thylakoid membrane. Functionally, required for the insertion of some light-harvesting complexes (LHC) proteins into the chloroplast thylakoid membrane. Essential for the assembly and activity of LHC I and II. Its function is probably partly distinct from that of ALB3.2. This is Inner membrane ALBINO3-like protein 1, chloroplastic (ALB3.1) from Chlamydomonas reinhardtii (Chlamydomonas smithii).